Consider the following 300-residue polypeptide: B1 kinase (300 aa).

Positions 16–282 (WVVGPLIGKG…ITMVNSLTYF (267 aa)) constitute a Protein kinase domain. Residues 22 to 30 (IGKGGFGSI) and K45 contribute to the ATP site. D147 acts as the Proton acceptor in catalysis.

Belongs to the protein kinase superfamily. Ser/Thr protein kinase family. Poxviruses subfamily. In terms of assembly, interacts with host JIP1; this interaction increases the amount of MAPK bound to JIP1 and subsequently increases the activity of transcription factors, such as JUN, that respond to these complexes. Interacts with protein OPG198; this interaction inhibits the repressive activity of OPG198 pseudokinase on viral replication factory formation. Mg(2+) is required as a cofactor. Autophosphorylated.

The protein resides in the virion. It localises to the host cytoplasm. It carries out the reaction L-seryl-[protein] + ATP = O-phospho-L-seryl-[protein] + ADP + H(+). The catalysed reaction is L-threonyl-[protein] + ATP = O-phospho-L-threonyl-[protein] + ADP + H(+). In terms of biological role, essential serine/threonine-protein kinase that plays different role in the viral life cycle. Phosphorylates the host small ribosomal protein RACK1 thereby customizing the ribosomes to a state optimal for viral mRNAs (which contain poly-A leaders) but not for host mRNAs. Facilitates viral DNA replication by inhibiting host BANF1, a cellular host defense responsive to foreign DNA. Phosphorylates host BANF1 on serine and threonine residues; this leads to BANF1 relocalization to the cytoplasm, loss of dimerization and impaired DNA binding activity. Indeed, BANF1 activity depends on its DNA-binding property which is blocked by VPK1-mediated phosphorylation. Required for viral intermediate genes expression, probably by inhibiting host BANF1. Modulates cellular responses via host JUN by two different mechanisms, either by direct phosphorylation or by modulation of upstream JIP1-MAPK complexes. Seems to participate in the accumulation/processing of late proteins and thus in virion maturation. In addition, inhibits B12 repressive activity on viral DNA replication via a phosphorylation-dependent mechanism. The chain is B1 kinase (OPG187) from Homo sapiens (Human).